The primary structure comprises 194 residues: ATP synthase subunit b 1 (194 aa).

Residues 1–21 (MLLGTVVTVLSTLPAIAYAMD) traverse the membrane as a helical segment.

Belongs to the ATPase B chain family. In terms of assembly, F-type ATPases have 2 components, F(1) - the catalytic core - and F(0) - the membrane proton channel. F(1) has five subunits: alpha(3), beta(3), gamma(1), delta(1), epsilon(1). F(0) has three main subunits: a(1), b(2) and c(10-14). The alpha and beta chains form an alternating ring which encloses part of the gamma chain. F(1) is attached to F(0) by a central stalk formed by the gamma and epsilon chains, while a peripheral stalk is formed by the delta and b chains.

It localises to the cell inner membrane. Its function is as follows. F(1)F(0) ATP synthase produces ATP from ADP in the presence of a proton or sodium gradient. F-type ATPases consist of two structural domains, F(1) containing the extramembraneous catalytic core and F(0) containing the membrane proton channel, linked together by a central stalk and a peripheral stalk. During catalysis, ATP synthesis in the catalytic domain of F(1) is coupled via a rotary mechanism of the central stalk subunits to proton translocation. Functionally, component of the F(0) channel, it forms part of the peripheral stalk, linking F(1) to F(0). This chain is ATP synthase subunit b 1, found in Granulibacter bethesdensis (strain ATCC BAA-1260 / CGDNIH1).